Reading from the N-terminus, the 130-residue chain is Large ribosomal subunit protein bL17 (130 aa).

This sequence belongs to the bacterial ribosomal protein bL17 family. In terms of assembly, part of the 50S ribosomal subunit. Contacts protein L32.

The sequence is that of Large ribosomal subunit protein bL17 from Pectobacterium atrosepticum (strain SCRI 1043 / ATCC BAA-672) (Erwinia carotovora subsp. atroseptica).